Here is a 191-residue protein sequence, read N- to C-terminus: Protein GrpE (191 aa).

The tract at residues 1-22 (MKDKHNQEHDHLSQEEPESCEK) is disordered.

It belongs to the GrpE family. Homodimer.

It localises to the cytoplasm. Participates actively in the response to hyperosmotic and heat shock by preventing the aggregation of stress-denatured proteins, in association with DnaK and GrpE. It is the nucleotide exchange factor for DnaK and may function as a thermosensor. Unfolded proteins bind initially to DnaJ; upon interaction with the DnaJ-bound protein, DnaK hydrolyzes its bound ATP, resulting in the formation of a stable complex. GrpE releases ADP from DnaK; ATP binding to DnaK triggers the release of the substrate protein, thus completing the reaction cycle. Several rounds of ATP-dependent interactions between DnaJ, DnaK and GrpE are required for fully efficient folding. This chain is Protein GrpE, found in Helicobacter pylori (strain Shi470).